Here is a 262-residue protein sequence, read N- to C-terminus: Polyamine aminopropyltransferase (262 aa).

One can recognise a PABS domain in the interval 1–249; sequence MWITQEITPY…DIHRAAFALP (249 aa). Residue asparagine 29 coordinates S-methyl-5'-thioadenosine. Aspartate 83 lines the spermidine pocket. The active-site Proton acceptor is the aspartate 155.

Belongs to the spermidine/spermine synthase family. Homodimer or homotetramer.

The protein localises to the cytoplasm. It catalyses the reaction S-adenosyl 3-(methylsulfanyl)propylamine + putrescine = S-methyl-5'-thioadenosine + spermidine + H(+). It functions in the pathway amine and polyamine biosynthesis; spermidine biosynthesis; spermidine from putrescine: step 1/1. In terms of biological role, catalyzes the irreversible transfer of a propylamine group from the amino donor S-adenosylmethioninamine (decarboxy-AdoMet) to putrescine (1,4-diaminobutane) to yield spermidine. In Helicobacter pylori (strain G27), this protein is Polyamine aminopropyltransferase.